A 336-amino-acid chain; its full sequence is Dihydroorotate dehydrogenase (quinone) (336 aa).

FMN contacts are provided by residues 62-66 (AGLDK) and threonine 86. Lysine 66 serves as a coordination point for substrate. Substrate is bound at residue 111-115 (NRMGF). Residues asparagine 139 and asparagine 172 each coordinate FMN. A substrate-binding site is contributed by asparagine 172. Residue serine 175 is the Nucleophile of the active site. Asparagine 177 is a substrate binding site. FMN is bound by residues lysine 217 and threonine 245. 246–247 (NT) is a substrate binding site. Residues glycine 268, glycine 297, and 318–319 (YS) each bind FMN.

This sequence belongs to the dihydroorotate dehydrogenase family. Type 2 subfamily. In terms of assembly, monomer. FMN serves as cofactor.

The protein resides in the cell membrane. It catalyses the reaction (S)-dihydroorotate + a quinone = orotate + a quinol. It functions in the pathway pyrimidine metabolism; UMP biosynthesis via de novo pathway; orotate from (S)-dihydroorotate (quinone route): step 1/1. In terms of biological role, catalyzes the conversion of dihydroorotate to orotate with quinone as electron acceptor. This is Dihydroorotate dehydrogenase (quinone) from Vibrio vulnificus (strain YJ016).